A 20-amino-acid polypeptide reads, in one-letter code: Cytosol aminopeptidase (20 aa).

Residue Ser6 is modified to Phosphoserine.

Belongs to the peptidase M17 family. As to quaternary structure, homohexamer. Zn(2+) is required as a cofactor. It depends on Mn(2+) as a cofactor.

It localises to the cytoplasm. It carries out the reaction Release of an N-terminal amino acid, Xaa-|-Yaa-, in which Xaa is preferably Leu, but may be other amino acids including Pro although not Arg or Lys, and Yaa may be Pro. Amino acid amides and methyl esters are also readily hydrolyzed, but rates on arylamides are exceedingly low.. It catalyses the reaction an S-substituted L-cysteinylglycine + H2O = an S-substituted L-cysteine + glycine. The enzyme catalyses L-cysteinylglycine + H2O = L-cysteine + glycine. The catalysed reaction is S-benzyl-L-cysteinylglycine + H2O = S-benzyl-L-cysteine + glycine. It carries out the reaction Release of N-terminal proline from a peptide.. Cytosolic metallopeptidase that catalyzes the removal of unsubstituted N-terminal hydrophobic amino acids from various peptides. The presence of Zn(2+) ions is essential for the peptidase activity, and the association with other cofactors can modulate the substrate spectificity of the enzyme. For instance, in the presence of Mn(2+), it displays a specific Cys-Gly hydrolyzing activity of Cys-Gly-S-conjugates. Involved in the metabolism of glutathione and in the degradation of glutathione S-conjugates, which may play a role in the control of the cell redox status. The protein is Cytosol aminopeptidase of Mesocricetus auratus (Golden hamster).